Reading from the N-terminus, the 487-residue chain is Solute carrier family 22 member 15-like (487 aa).

A helical membrane pass occupies residues 23–43 (FLTLLQIYVACQSMLIVLVGA). A glycan (N-linked (GlcNAc...) asparagine) is linked at Asn70. 11 helical membrane passes run 90–110 (LASSLFFAGLLIGNVFFGPLS), 117–137 (PVYLSGLFFDIIFGYFTALAP), 141–161 (VFAVSRFFVGVMNGGMALVSF), 178–198 (SLTNLIFAVGIAFYALLGFYI), 203–223 (TLAFVANSPGIFFLLLSFVLP), 286–306 (ILLMYIWYVCSLVYYGLTLNA), 315–335 (LNVALYGLVEVPAFPLCLYFI), 345–365 (ATAGFLVFAGFACIFTIFVPE), 374–394 (TVLALFGKLSVSAAFNVVYIY), 408–428 (LGVCAMACRFGGILSPFIPAM), and 435–455 (MPFVAFGISGISAGILSLLLP).

It belongs to the major facilitator (TC 2.A.1) superfamily. Organic cation transporter (TC 2.A.1.19) family.

Its subcellular location is the membrane. Functionally, probably transports organic cations. In Xenopus laevis (African clawed frog), this protein is Solute carrier family 22 member 15-like (slc22a15b).